The chain runs to 35 residues: Photosystem II reaction center protein Psb30 (35 aa).

Residues 7-27 (LIANFGALALITLAGPAVIFI) traverse the membrane as a helical segment.

It belongs to the Psb30/Ycf12 family. As to quaternary structure, PSII is composed of 1 copy each of membrane proteins PsbA, PsbB, PsbC, PsbD, PsbE, PsbF, PsbH, PsbI, PsbJ, PsbK, PsbL, PsbM, PsbT, PsbX, PsbY, PsbZ, Psb30/Ycf12, peripheral proteins PsbO, CyanoQ (PsbQ), PsbU, PsbV and a large number of cofactors. It forms dimeric complexes.

It is found in the cellular thylakoid membrane. Functionally, a core subunit of photosystem II (PSII), probably helps stabilize the reaction center. This chain is Photosystem II reaction center protein Psb30, found in Synechococcus sp. (strain CC9311).